Consider the following 314-residue polypeptide: Malate dehydrogenase (314 aa).

Residues 12–17 and Asp36 each bind NAD(+); that span reads GSGFTG. Arg87 and Arg93 together coordinate substrate. NAD(+) contacts are provided by residues Asn100 and 123 to 125; that span reads LTN. Asn125 is a substrate binding site. The residue at position 149 (Ser149) is a Phosphoserine. Position 156 (Arg156) interacts with substrate. The active-site Proton acceptor is the His180.

Belongs to the LDH/MDH superfamily. MDH type 3 family.

The catalysed reaction is (S)-malate + NAD(+) = oxaloacetate + NADH + H(+). In terms of biological role, catalyzes the reversible oxidation of malate to oxaloacetate. This chain is Malate dehydrogenase, found in Shouchella clausii (strain KSM-K16) (Alkalihalobacillus clausii).